We begin with the raw amino-acid sequence, 497 residues long: Delayed-rectifier potassium channel regulatory subunit KCNS1 (497 aa).

The Cytoplasmic portion of the chain corresponds to 1–186; sequence MVSEFPGPGS…LTMENPGYSL (186 aa). A helical transmembrane segment spans residues 187–208; sequence PSKLFSCVSIGVVLASIAAMCI. Residues 209-239 are Extracellular-facing; the sequence is HSLPEYQAREAAAAVAAVAAGRSAEDVRDDP. Residues 240 to 262 form a helical membrane-spanning segment; that stretch reads VLRRLEYFCIAWFSFEVSSRLLL. Residues 263–273 lie on the Cytoplasmic side of the membrane; the sequence is APSTRNFFCHP. The chain crosses the membrane as a helical span at residues 274–291; it reads LNLIDIVSVLPFYLTLLA. Over 292–309 the chain is Extracellular; that stretch reads GAALGDRRGASGEELGDL. A helical; Voltage-sensor transmembrane segment spans residues 310–330; it reads GKVVQVFRLMRIFRVLKLARH. The Cytoplasmic segment spans residues 331–345; that stretch reads STGLRSLGATLKHSY. The helical transmembrane segment at 346-367 threads the bilayer; it reads REVGILLLYLAVGVSVFSGVAY. The Extracellular segment spans residues 368 to 379; sequence TAEEKNVGFDTI. The helical intramembrane region spans 380-391; sequence PACWWWGTVSMT. Residues 392–397 carry the Selectivity filter motif; sequence TVGYGD. Residues 392 to 399 lie within the membrane without spanning it; sequence TVGYGDVV. Residues 400–406 are Extracellular-facing; the sequence is PETVAGK. A helical membrane pass occupies residues 407 to 435; the sequence is LAASGCILGGILVVALPITIIFNKFSHFY. Over 436–497 the chain is Cytoplasmic; it reads RRQKALEAAV…PSEPAKSHSY (62 aa). The interval 464–497 is disordered; it reads SDVSLETSRETSQEGRSTDLETQAPSEPAKSHSY. Residues 470 to 482 show a composition bias toward basic and acidic residues; that stretch reads TSRETSQEGRSTD.

The protein belongs to the potassium channel family. S (TC 1.A.1.2) subfamily. Kv9.1/KCNS1 sub-subfamily. In terms of assembly, heterotetramer with KCNB1. Heterotetramer with KCNB2. Does not form homomultimers. Highly expressed in brain, but not in the other tissues tested.

Its subcellular location is the cell membrane. Potassium channel regulatory subunit that modulate the delayed rectifier voltage-gated potassium channel activity of KCNB1 and KCNB2 by altering their kinetics, expression levels, and shifting the half-inactivation potential to more polarized values. While it does not form functional channels on its own, it can form functional heterotetrameric channels with KCNB1 and KCNB2. Each regulatory subunit has unique regulatory properties that can lead to extensive inhibition, significant changes in kinetics, and/or substantial shifts in the voltage dependencies of the inactivation process. This chain is Delayed-rectifier potassium channel regulatory subunit KCNS1, found in Rattus norvegicus (Rat).